A 329-amino-acid chain; its full sequence is Ketol-acid reductoisomerase (NADP(+)) (329 aa).

One can recognise a KARI N-terminal Rossmann domain in the interval 2–182 (TQLFYDTDAD…GGTRAGILET (181 aa)). NADP(+)-binding positions include 25–28 (YGSQ), Ser-51, Ser-53, and 83–86 (DEFQ). Residue His-108 is part of the active site. Gly-134 lines the NADP(+) pocket. The region spanning 183–328 (NFKEETETDL…KGLRSMFSWL (146 aa)) is the KARI C-terminal knotted domain. The Mg(2+) site is built by Asp-191, Glu-195, Glu-227, and Glu-231. Ser-252 is a substrate binding site.

The protein belongs to the ketol-acid reductoisomerase family. It depends on Mg(2+) as a cofactor.

It carries out the reaction (2R)-2,3-dihydroxy-3-methylbutanoate + NADP(+) = (2S)-2-acetolactate + NADPH + H(+). The catalysed reaction is (2R,3R)-2,3-dihydroxy-3-methylpentanoate + NADP(+) = (S)-2-ethyl-2-hydroxy-3-oxobutanoate + NADPH + H(+). It functions in the pathway amino-acid biosynthesis; L-isoleucine biosynthesis; L-isoleucine from 2-oxobutanoate: step 2/4. The protein operates within amino-acid biosynthesis; L-valine biosynthesis; L-valine from pyruvate: step 2/4. Involved in the biosynthesis of branched-chain amino acids (BCAA). Catalyzes an alkyl-migration followed by a ketol-acid reduction of (S)-2-acetolactate (S2AL) to yield (R)-2,3-dihydroxy-isovalerate. In the isomerase reaction, S2AL is rearranged via a Mg-dependent methyl migration to produce 3-hydroxy-3-methyl-2-ketobutyrate (HMKB). In the reductase reaction, this 2-ketoacid undergoes a metal-dependent reduction by NADPH to yield (R)-2,3-dihydroxy-isovalerate. This chain is Ketol-acid reductoisomerase (NADP(+)), found in Prochlorococcus marinus (strain MIT 9215).